Consider the following 424-residue polypeptide: Hemagglutinin-esterase (424 aa).

An N-terminal signal peptide occupies residues 1-16 (MFLLPRFVLVSCIIGS). The tract at residues 7 to 127 (FVLVSCIIGS…SNDIWMQNKG (121 aa)) is esterase domain 1. Over 17–392 (LGFENPPTNV…PICVYDPLPL (376 aa)) the chain is Virion surface. The Nucleophile role is filled by S40. Residues C44 and C65 are joined by a disulfide bond. N-linked (GlcNAc...) asparagine; by host glycosylation is found at N54, N89, N153, N236, and N301. Intrachain disulfides connect C113–C162, C197–C276, and C205–C249. The tract at residues 128–266 (LFYTQVYKNM…GNYLAISNEL (139 aa)) is receptor binding. Positions 267–379 (LLTVPTKAIC…RCPTAADINT (113 aa)) are esterase domain 2. C307 and C312 are disulfide-bonded. N316 carries an N-linked (GlcNAc...) asparagine; by host glycan. Active-site charge relay system residues include D326 and H329. A disulfide bond links C347 and C371. An N-linked (GlcNAc...) asparagine; by host glycan is attached at N358. Residues 393-413 (ILLGILLGVAVIIIVVLLLYF) form a helical membrane-spanning segment. Over 414–424 (MVDNGTRLHDA) the chain is Intravirion. N-linked (GlcNAc...) asparagine; by host glycosylation occurs at N417.

It belongs to the influenza type C/coronaviruses hemagglutinin-esterase family. Homodimer; disulfide-linked. Forms a complex with the M protein in the pre-Golgi. Associates then with S-M complex to form a ternary complex S-M-HE. In terms of processing, N-glycosylated in the host RER.

The protein localises to the virion membrane. It is found in the host cell membrane. It carries out the reaction N-acetyl-9-O-acetylneuraminate + H2O = N-acetylneuraminate + acetate + H(+). The enzyme catalyses N-acetyl-4-O-acetylneuraminate + H2O = N-acetylneuraminate + acetate + H(+). Structural protein that makes short spikes at the surface of the virus. Contains receptor binding and receptor-destroying activities. Mediates de-O-acetylation of N-acetyl-4-O-acetylneuraminic acid, which is probably the receptor determinant recognized by the virus on the surface of erythrocytes and susceptible cells. This receptor-destroying activity is important for virus release as it probably helps preventing self-aggregation and ensures the efficient spread of the progeny virus from cell to cell. May serve as a secondary viral attachment protein for initiating infection, the spike protein being the major one. May become a target for both the humoral and the cellular branches of the immune system. The polypeptide is Hemagglutinin-esterase (Bovine coronavirus (strain G95) (BCoV)).